A 260-amino-acid chain; its full sequence is Acetylglutamate kinase (260 aa).

Substrate-binding positions include 45–46 (GG), Arg67, and Asn159.

Belongs to the acetylglutamate kinase family. ArgB subfamily.

It is found in the cytoplasm. It catalyses the reaction N-acetyl-L-glutamate + ATP = N-acetyl-L-glutamyl 5-phosphate + ADP. It participates in amino-acid biosynthesis; L-arginine biosynthesis; N(2)-acetyl-L-ornithine from L-glutamate: step 2/4. Functionally, catalyzes the ATP-dependent phosphorylation of N-acetyl-L-glutamate. This Colwellia psychrerythraea (strain 34H / ATCC BAA-681) (Vibrio psychroerythus) protein is Acetylglutamate kinase.